The chain runs to 58 residues: Small ribosomal subunit protein bS21 (58 aa).

The interval 31–58 (DLKRIRHHETPVEKYKRKAQQRRRSRRR) is disordered. Positions 45–58 (YKRKAQQRRRSRRR) are enriched in basic residues.

This sequence belongs to the bacterial ribosomal protein bS21 family.

The chain is Small ribosomal subunit protein bS21 from Prochlorococcus marinus (strain MIT 9303).